Reading from the N-terminus, the 226-residue chain is Deoxyribose-phosphate aldolase (226 aa).

Aspartate 84 functions as the Proton donor/acceptor in the catalytic mechanism. Lysine 146 (schiff-base intermediate with acetaldehyde) is an active-site residue. Lysine 188 functions as the Proton donor/acceptor in the catalytic mechanism.

This sequence belongs to the DeoC/FbaB aldolase family. DeoC type 1 subfamily.

The protein localises to the cytoplasm. It carries out the reaction 2-deoxy-D-ribose 5-phosphate = D-glyceraldehyde 3-phosphate + acetaldehyde. It participates in carbohydrate degradation; 2-deoxy-D-ribose 1-phosphate degradation; D-glyceraldehyde 3-phosphate and acetaldehyde from 2-deoxy-alpha-D-ribose 1-phosphate: step 2/2. Catalyzes a reversible aldol reaction between acetaldehyde and D-glyceraldehyde 3-phosphate to generate 2-deoxy-D-ribose 5-phosphate. This Pyrobaculum arsenaticum (strain DSM 13514 / JCM 11321 / PZ6) protein is Deoxyribose-phosphate aldolase.